The primary structure comprises 289 residues: Bidirectional sugar transporter SWEET15 (289 aa).

Residues 1 to 10 lie on the Extracellular side of the membrane; the sequence is MAMAMANHHT. A helical membrane pass occupies residues 11-31; sequence LGLIFGILGNIISFLVYFAPA. Residues 14-100 form the MtN3/slv 1 domain; it reads IFGILGNIIS…LYFFYAPMQA (87 aa). Topologically, residues 32 to 45 are cytoplasmic; it reads PTFYRIYKRKSAEG. Residues 46–66 traverse the membrane as a helical segment; sequence FHSLPYIVALFSAMLWLYYAL. Topologically, residues 67–70 are extracellular; it reads LKKD. A helical membrane pass occupies residues 71 to 91; the sequence is AFLLITINSFGCAIESFYILL. The Cytoplasmic portion of the chain corresponds to 92-106; the sequence is YFFYAPMQAKKQTLK. The helical transmembrane segment at 107-127 threads the bilayer; that stretch reads VVISLNVGVFSILVVLIQFLL. At 128 to 134 the chain is on the extracellular side; it reads KGSNRIN. A helical transmembrane segment spans residues 135–155; the sequence is VFGWICASFSVAVFAAPLSIV. Residues 136 to 219 enclose the MtN3/slv 2 domain; it reads FGWICASFSV…VLYGFYRNAG (84 aa). The Cytoplasmic segment spans residues 156-167; it reads AKVIRTKSVEFM. The helical transmembrane segment at 168–188 threads the bilayer; it reads PFSLSFFLTLSAIMWFAYGLL. The Extracellular segment spans residues 189 to 193; that stretch reads KNDPC. The helical transmembrane segment at 194–214 threads the bilayer; the sequence is VAIPNILGVILGLVQMVLYGF. Over 215-289 the chain is Cytoplasmic; that stretch reads YRNAGKEKME…GELQPNGSTV (75 aa). A disordered region spans residues 249-289; the sequence is GAQQNGIKKSGSEDVKDDEETGNREKSTENSGELQPNGSTV. Positions 277–289 are enriched in polar residues; sequence ENSGELQPNGSTV.

This sequence belongs to the SWEET sugar transporter family. As to quaternary structure, forms homooligomers and/or heterooligomers.

Its subcellular location is the cell membrane. Mediates both low-affinity uptake and efflux of sugar across the plasma membrane. In Vitis vinifera (Grape), this protein is Bidirectional sugar transporter SWEET15.